A 372-amino-acid polypeptide reads, in one-letter code: RNA polymerase sigma factor SigA (372 aa).

The interval 139–209 (LAEANLRLVV…TRAIADQART (71 aa)) is sigma-70 factor domain-2. An Interaction with polymerase core subunit RpoC motif is present at residues 163–166 (DLIQ). A sigma-70 factor domain-3 region spans residues 218–294 (ETINKLIRVQ…DQDALAPSDA (77 aa)). The sigma-70 factor domain-4 stretch occupies residues 307-360 (VLDTLTDREENVLRLRFGLDDGRTRTLEEVGKVFGVTRERIRQIEAKALRKLRH). Residues 333-352 (LEEVGKVFGVTRERIRQIEA) constitute a DNA-binding region (H-T-H motif).

It belongs to the sigma-70 factor family. RpoD/SigA subfamily. In terms of assembly, interacts transiently with the RNA polymerase catalytic core.

Its subcellular location is the cytoplasm. Functionally, sigma factors are initiation factors that promote the attachment of RNA polymerase to specific initiation sites and are then released. This sigma factor is the primary sigma factor during exponential growth. The sequence is that of RNA polymerase sigma factor SigA from Halalkalibacterium halodurans (strain ATCC BAA-125 / DSM 18197 / FERM 7344 / JCM 9153 / C-125) (Bacillus halodurans).